We begin with the raw amino-acid sequence, 88 residues long: Small ribosomal subunit protein uS15c (88 aa).

This sequence belongs to the universal ribosomal protein uS15 family. In terms of assembly, part of the 30S ribosomal subunit.

The protein resides in the plastid. The protein localises to the chloroplast. The polypeptide is Small ribosomal subunit protein uS15c (rps15) (Capsella bursa-pastoris (Shepherd's purse)).